A 473-amino-acid polypeptide reads, in one-letter code: Pyruvate kinase (473 aa).

Arginine 32 is a substrate binding site. The K(+) site is built by asparagine 34, serine 36, aspartate 66, and threonine 67. 34 to 37 (NFSH) contacts ATP. ATP contacts are provided by arginine 73 and lysine 155. Glutamate 221 provides a ligand contact to Mg(2+). Substrate is bound by residues glycine 244, aspartate 245, and threonine 277. A Mg(2+)-binding site is contributed by aspartate 245.

Belongs to the pyruvate kinase family. In terms of assembly, homotetramer. Mg(2+) is required as a cofactor. Requires K(+) as cofactor.

The enzyme catalyses pyruvate + ATP = phosphoenolpyruvate + ADP + H(+). It functions in the pathway carbohydrate degradation; glycolysis; pyruvate from D-glyceraldehyde 3-phosphate: step 5/5. The sequence is that of Pyruvate kinase (pyk) from Clostridium acetobutylicum (strain ATCC 824 / DSM 792 / JCM 1419 / IAM 19013 / LMG 5710 / NBRC 13948 / NRRL B-527 / VKM B-1787 / 2291 / W).